Consider the following 378-residue polypeptide: UDP-N-acetylglucosamine--N-acetylmuramyl-(pentapeptide) pyrophosphoryl-undecaprenol N-acetylglucosamine transferase (378 aa).

UDP-N-acetyl-alpha-D-glucosamine contacts are provided by residues 14-16, asparagine 125, arginine 165, serine 193, and glutamine 293; that span reads TGG.

It belongs to the glycosyltransferase 28 family. MurG subfamily.

It is found in the cell inner membrane. It catalyses the reaction di-trans,octa-cis-undecaprenyl diphospho-N-acetyl-alpha-D-muramoyl-L-alanyl-D-glutamyl-meso-2,6-diaminopimeloyl-D-alanyl-D-alanine + UDP-N-acetyl-alpha-D-glucosamine = di-trans,octa-cis-undecaprenyl diphospho-[N-acetyl-alpha-D-glucosaminyl-(1-&gt;4)]-N-acetyl-alpha-D-muramoyl-L-alanyl-D-glutamyl-meso-2,6-diaminopimeloyl-D-alanyl-D-alanine + UDP + H(+). It participates in cell wall biogenesis; peptidoglycan biosynthesis. Functionally, cell wall formation. Catalyzes the transfer of a GlcNAc subunit on undecaprenyl-pyrophosphoryl-MurNAc-pentapeptide (lipid intermediate I) to form undecaprenyl-pyrophosphoryl-MurNAc-(pentapeptide)GlcNAc (lipid intermediate II). This chain is UDP-N-acetylglucosamine--N-acetylmuramyl-(pentapeptide) pyrophosphoryl-undecaprenol N-acetylglucosamine transferase, found in Bartonella quintana (strain Toulouse) (Rochalimaea quintana).